Consider the following 184-residue polypeptide: Protein GrpE (184 aa).

The tract at residues 1 to 24 is disordered; that stretch reads MADEQLDEKNLNSEEAGAVNGDAR.

Belongs to the GrpE family. Homodimer.

The protein localises to the cytoplasm. Its function is as follows. Participates actively in the response to hyperosmotic and heat shock by preventing the aggregation of stress-denatured proteins, in association with DnaK and GrpE. It is the nucleotide exchange factor for DnaK and may function as a thermosensor. Unfolded proteins bind initially to DnaJ; upon interaction with the DnaJ-bound protein, DnaK hydrolyzes its bound ATP, resulting in the formation of a stable complex. GrpE releases ADP from DnaK; ATP binding to DnaK triggers the release of the substrate protein, thus completing the reaction cycle. Several rounds of ATP-dependent interactions between DnaJ, DnaK and GrpE are required for fully efficient folding. This is Protein GrpE from Pseudomonas entomophila (strain L48).